A 366-amino-acid chain; its full sequence is Chorismate synthase (366 aa).

NADP(+) is bound by residues Arg-48 and Arg-54. Residues 125–127 (RSS), 238–239 (NA), Gly-278, 293–297 (KPTSS), and Arg-319 contribute to the FMN site.

It belongs to the chorismate synthase family. Homotetramer. The cofactor is FMNH2.

It carries out the reaction 5-O-(1-carboxyvinyl)-3-phosphoshikimate = chorismate + phosphate. It functions in the pathway metabolic intermediate biosynthesis; chorismate biosynthesis; chorismate from D-erythrose 4-phosphate and phosphoenolpyruvate: step 7/7. Its function is as follows. Catalyzes the anti-1,4-elimination of the C-3 phosphate and the C-6 proR hydrogen from 5-enolpyruvylshikimate-3-phosphate (EPSP) to yield chorismate, which is the branch point compound that serves as the starting substrate for the three terminal pathways of aromatic amino acid biosynthesis. This reaction introduces a second double bond into the aromatic ring system. The sequence is that of Chorismate synthase from Cellvibrio japonicus (strain Ueda107) (Pseudomonas fluorescens subsp. cellulosa).